A 676-amino-acid polypeptide reads, in one-letter code: Urocanate hydratase (676 aa).

Residues 15-35 (PLPENRGRQAGVPHAPVRTPS) are disordered. NAD(+)-binding positions include 126-127 (GG), Gln204, 251-253 (GMS), Glu271, 317-318 (NV), 343-347 (QTSCH), 354-355 (YY), Tyr403, and Gly594.

Belongs to the urocanase family. NAD(+) is required as a cofactor.

It carries out the reaction 4-imidazolone-5-propanoate = trans-urocanate + H2O. The protein operates within amino-acid degradation; L-histidine degradation into L-glutamate; N-formimidoyl-L-glutamate from L-histidine: step 2/3. This chain is Urocanate hydratase (UROC1), found in Homo sapiens (Human).